A 203-amino-acid chain; its full sequence is Large ribosomal subunit protein bL25 (203 aa).

This sequence belongs to the bacterial ribosomal protein bL25 family. CTC subfamily. In terms of assembly, part of the 50S ribosomal subunit; part of the 5S rRNA/L5/L18/L25 subcomplex. Contacts the 5S rRNA. Binds to the 5S rRNA independently of L5 and L18.

Functionally, this is one of the proteins that binds to the 5S RNA in the ribosome where it forms part of the central protuberance. The polypeptide is Large ribosomal subunit protein bL25 (Dechloromonas aromatica (strain RCB)).